Here is a 417-residue protein sequence, read N- to C-terminus: Probable metalloprotease arx1 (417 aa).

The protein belongs to the peptidase M24 family. In terms of assembly, component of the nucleoplasmic and cytoplasmic pre-60S ribosomal particles.

It localises to the cytoplasm. It is found in the nucleus. Its function is as follows. Probable metalloprotease involved in proper assembly of pre-ribosomal particles during the biogenesis of the 60S ribosomal subunit. Accompanies the pre-60S particles to the cytoplasm. This chain is Probable metalloprotease arx1 (arx1), found in Schizosaccharomyces pombe (strain 972 / ATCC 24843) (Fission yeast).